Reading from the N-terminus, the 497-residue chain is Putative glucuronosyltransferase PGSIP8 (497 aa).

Residues 3–23 form a helical membrane-spanning segment; that stretch reads LQRGFVFLSLVLSFMIIETTA. Residues Asp-165 and Asp-167 each coordinate Mn(2+). A run of 5 helical transmembrane segments spans residues 319–339, 365–385, 388–408, 418–438, and 442–462; these read YSAEMPLVIIQAMFYLGIIVV, GFKLIALLSVVAAYIFPFFTI, TIHPLIGWSLYLMASFALSSI, LPVLTPWLGILGTLLVMAFPW, and GVVRALSVFAYAFCCAPFVWV.

This sequence belongs to the glycosyltransferase 8 family. Glycogenin subfamily. The cofactor is Mn(2+).

The protein resides in the membrane. This is Putative glucuronosyltransferase PGSIP8 (PGSIP8) from Arabidopsis thaliana (Mouse-ear cress).